Consider the following 37-residue polypeptide: Large ribosomal subunit protein bL36 (37 aa).

The protein belongs to the bacterial ribosomal protein bL36 family.

In Alkalilimnicola ehrlichii (strain ATCC BAA-1101 / DSM 17681 / MLHE-1), this protein is Large ribosomal subunit protein bL36.